The sequence spans 279 residues: D-aminoacyl-tRNA deacylase (279 aa).

A disordered region spans residues glycine 81–glycine 100.

It belongs to the DtdA deacylase family. As to quaternary structure, monomer. Zn(2+) is required as a cofactor.

The catalysed reaction is a D-aminoacyl-tRNA + H2O = a tRNA + a D-alpha-amino acid + H(+). It carries out the reaction glycyl-tRNA(Ala) + H2O = tRNA(Ala) + glycine + H(+). In terms of biological role, D-aminoacyl-tRNA deacylase with broad substrate specificity. By recycling D-aminoacyl-tRNA to D-amino acids and free tRNA molecules, this enzyme counteracts the toxicity associated with the formation of D-aminoacyl-tRNA entities in vivo. In Aeropyrum pernix (strain ATCC 700893 / DSM 11879 / JCM 9820 / NBRC 100138 / K1), this protein is D-aminoacyl-tRNA deacylase.